Consider the following 199-residue polypeptide: NAD(P)H dehydrogenase (quinone) (199 aa).

One can recognise a Flavodoxin-like domain in the interval 4–190; sequence VLVLYYSSYG…AMARFQGGHV (187 aa). Residues 10-15 and 78-80 each bind FMN; these read SSYGHI and TRF. Tyr12 contacts NAD(+). Residue Trp98 participates in substrate binding. FMN is bound by residues 113 to 119 and His134; that span reads STATQHG.

This sequence belongs to the WrbA family. Requires FMN as cofactor.

It catalyses the reaction a quinone + NADH + H(+) = a quinol + NAD(+). It carries out the reaction a quinone + NADPH + H(+) = a quinol + NADP(+). The protein is NAD(P)H dehydrogenase (quinone) of Azoarcus sp. (strain BH72).